The primary structure comprises 569 residues: Small ribosomal subunit protein bS1 (569 aa).

6 S1 motif domains span residues 52–116, 134–199, 220–288, 305–375, 392–462, and 479–548; these read GAIL…LSRE, GSIV…VSRR, GERR…LGLK, GKRV…LGLK, GLRV…LGVK, and GSDI…LSIK.

It belongs to the bacterial ribosomal protein bS1 family.

Functionally, binds mRNA; thus facilitating recognition of the initiation point. It is needed to translate mRNA with a short Shine-Dalgarno (SD) purine-rich sequence. In Chlamydia trachomatis serovar D (strain ATCC VR-885 / DSM 19411 / UW-3/Cx), this protein is Small ribosomal subunit protein bS1 (rpsA).